The chain runs to 105 residues: Met repressor (105 aa).

Belongs to the MetJ family. In terms of assembly, homodimer.

Its subcellular location is the cytoplasm. This regulatory protein, when combined with SAM (S-adenosylmethionine) represses the expression of the methionine regulon and of enzymes involved in SAM synthesis. The polypeptide is Met repressor (Pasteurella multocida (strain Pm70)).